The following is a 619-amino-acid chain: Sodium-dependent dopamine transporter (619 aa).

The Cytoplasmic portion of the chain corresponds to 1 to 56 (MSKSKCSVGPMSSVVAPAKEPNAVGPREVELILVKEQNGVQLTNSTLINPPQTPVE). The chain crosses the membrane as a discontinuously helical span at residues 57-95 (VQERETWSKKIDFLLSVIGFAVDLANVWRFPYLCYKNGG). Na(+)-binding residues include glycine 75, alanine 77, valine 78, aspartate 79, and asparagine 82. Residue aspartate 79 participates in dopamine binding. 2 consecutive transmembrane segments (helical) span residues 96-127 (GAFL…NREG) and 128-171 (AAGV…FSSF). Positions 149 and 153 each coordinate dopamine. Residues 172 to 235 (TMDLPWIHCN…SRGIDDLGPP (64 aa)) are Extracellular-facing. Cysteine 180 and cysteine 189 are disulfide-bonded. Asparagine 181, asparagine 188, asparagine 196, and asparagine 204 each carry an N-linked (GlcNAc...) asparagine glycan. A run of 2 helical transmembrane segments spans residues 236–255 (RWQL…FSLW) and 256–286 (KGVK…GVTL). The Extracellular portion of the chain corresponds to 287-305 (PGAMDGIRAYLSVDFYRLC). Residues 306–334 (EASVWIDAATQVCFSLGVGFGVLIAFSSY) form a discontinuously helical membrane-spanning segment. A chloride-binding site is contributed by glutamine 316. Phenylalanine 319 is a binding site for dopamine. Residues serine 320 and asparagine 352 each coordinate Na(+). Chloride is bound at residue serine 320. The chain crosses the membrane as a helical span at residues 335-375 (NKFTNNCYRDAIITTSINSLTSFSSGFVVFSFLGYMAQKHN). Chloride is bound at residue serine 356. Residues 376–399 (VPIRDVATDGPGLIFIIYPEAIAT) are Extracellular-facing. Transmembrane regions (helical) follow at residues 400–441 (LPLS…QLLH), 442–465 (RHRE…CVTN), and 466–498 (GGIY…AWFY). Residues leucine 417, aspartate 420, and serine 421 each coordinate Na(+). Serine 421 and alanine 422 together coordinate dopamine. Over 499–515 (GVQQFSDDIKQMTGQRP) the chain is Cytoplasmic. Residues 516–541 (NLYWRLCWKLVSPCFLLYVVVVSIVT) form a helical membrane-spanning segment. The Extracellular segment spans residues 542–552 (FRPPHYGAYIF). Residues 553-582 (PDWANALGWIIATSSMAMVPIYATYKFCSL) traverse the membrane as a helical segment. Positions 560–589 (GWIIATSSMAMVPIYATYKFCSLPGSFREK) are interaction with TGFB1I1. The Cytoplasmic segment spans residues 583-619 (PGSFREKLAYAITPEKDRQLVDRGEVRQFTLRHWLLV).

This sequence belongs to the sodium:neurotransmitter symporter (SNF) (TC 2.A.22) family. SLC6A3 subfamily. As to quaternary structure, monomer. Homooligomer; disulfide-linked. Interacts with PRKCABP and TGFB1I1. Interacts (via N-terminus) with SYNGR3 (via N-terminus). Interacts with SLC18A2. Interacts with TOR1A (ATP-bound); TOR1A regulates SLC6A3 subcellular location. Interacts with alpha-synuclein/SNCA. Interacts with SEPTIN4. In terms of tissue distribution, found in the substantia nigra and ventral tegmental dopamine neurons, in fibers of the medial forebrain bundle ascending into the striatum, and within dense fiber networks and varicosities in the dorsal and ventral striatum (at protein level). Lower expression in the cortex (at protein level). Absent from the corpus callosum. Expressed throughout the retina at postnatal day 8.

It localises to the cell membrane. It is found in the cell projection. Its subcellular location is the neuron projection. The protein resides in the axon. It carries out the reaction dopamine(out) + chloride(out) + Na(+)(out) = dopamine(in) + chloride(in) + Na(+)(in). It catalyses the reaction (R)-noradrenaline(out) + chloride(out) + Na(+)(out) = (R)-noradrenaline(in) + chloride(in) + Na(+)(in). The enzyme catalyses dopamine(out) + chloride(out) + 2 Na(+)(out) = dopamine(in) + chloride(in) + 2 Na(+)(in). With respect to regulation, inhibited by amphetamine, bupropion, cocaine and ritalin. Inhibited by zinc ions. In terms of biological role, mediates sodium- and chloride-dependent transport of dopamine. Also mediates sodium- and chloride-dependent transport of norepinephrine (also known as noradrenaline). Regulator of light-dependent retinal hyaloid vessel regression, downstream of OPN5 signaling. The sequence is that of Sodium-dependent dopamine transporter (Slc6a3) from Mus musculus (Mouse).